A 378-amino-acid polypeptide reads, in one-letter code: AA13 family lytic polysaccharide monooxygenase A (378 aa).

A signal peptide spans 1 to 17; the sequence is MKWSVIQALALASGVQA. H18 lines the Cu(2+) pocket. H18 carries the methylhistidine modification. In terms of domain architecture, Chitin-binding type-4 spans 18-244; sequence HGYLTFPMSR…PQIYLTCADI (227 aa). Intrachain disulfides connect C39–C42, C65–C241, C101–C199, C117–C144, C152–C160, C166–C172, and C180–C188. Position 108 (H108) interacts with Cu(2+). N221 carries an N-linked (GlcNAc...) asparagine glycan. Y238 contacts Cu(2+). The segment covering 250-263 has biased composition (low complexity); the sequence is DSQSPPTTTTTSTP. The segment at 250-272 is disordered; it reads DSQSPPTTTTTSTPASPPPTSCA. The CBM20 domain occupies 272–378; sequence ATPAASVAVT…GTATVDTAWK (107 aa).

It belongs to the polysaccharide monooxygenase AA13 family. Cu(2+) is required as a cofactor. Post-translationally, O-mannosylated.

The protein localises to the secreted. The catalysed reaction is starch + reduced acceptor + O2 = D-glucono-1,5-lactone-terminated malto-oligosaccharides + short-chain malto-oligosaccharides + acceptor + H2O.. Activity is inhibited by both beta-cyclodextrin or amylose that block the access to the active site. In terms of biological role, starch-active lytic polysaccharide monooxygenase that oxidizes the C1 position of starch substrates. Catalysis by LPMOs requires the reduction of the active-site copper from Cu(II) to Cu(I) by a reducing agent and H(2)O(2) or O(2) as a cosubstrate. The sequence is that of AA13 family lytic polysaccharide monooxygenase A from Pyricularia oryzae (strain 70-15 / ATCC MYA-4617 / FGSC 8958) (Rice blast fungus).